The primary structure comprises 601 residues: Sulfite reductase [NADPH] flavoprotein alpha-component (601 aa).

In terms of domain architecture, Flavodoxin-like spans 64–202 (ITLISASQTG…AAQEWRARVV (139 aa)). Residues 70–75 (SQTGNA), 117–120 (STQG), and 153–162 (LGDTSYEFFC) each bind FMN. Residues 236–450 (EAPLSASLAV…IEHNDNFRLP (215 aa)) enclose the FAD-binding FR-type domain. FAD contacts are provided by residues Thr-324, Ala-358, 388-391 (RLYS), 406-408 (TVG), Tyr-412, and 421-424 (GGAS). NADP(+)-binding positions include 521 to 522 (SR), 527 to 531 (KIYVQ), and Asp-563. Residue Tyr-601 participates in FAD binding.

The protein belongs to the NADPH-dependent sulphite reductase flavoprotein subunit CysJ family. In the N-terminal section; belongs to the flavodoxin family. It in the C-terminal section; belongs to the flavoprotein pyridine nucleotide cytochrome reductase family. As to quaternary structure, alpha(8)-beta(8). The alpha component is a flavoprotein, the beta component is a hemoprotein. It depends on FAD as a cofactor. The cofactor is FMN.

The enzyme catalyses hydrogen sulfide + 3 NADP(+) + 3 H2O = sulfite + 3 NADPH + 4 H(+). It participates in sulfur metabolism; hydrogen sulfide biosynthesis; hydrogen sulfide from sulfite (NADPH route): step 1/1. In terms of biological role, component of the sulfite reductase complex that catalyzes the 6-electron reduction of sulfite to sulfide. This is one of several activities required for the biosynthesis of L-cysteine from sulfate. The flavoprotein component catalyzes the electron flow from NADPH -&gt; FAD -&gt; FMN to the hemoprotein component. The protein is Sulfite reductase [NADPH] flavoprotein alpha-component of Citrobacter koseri (strain ATCC BAA-895 / CDC 4225-83 / SGSC4696).